The sequence spans 58 residues: Large ribosomal subunit protein uL30 (58 aa).

It belongs to the universal ribosomal protein uL30 family. In terms of assembly, part of the 50S ribosomal subunit.

The protein is Large ribosomal subunit protein uL30 of Erythrobacter litoralis (strain HTCC2594).